The primary structure comprises 196 residues: ATP-dependent Clp protease proteolytic subunit (196 aa).

The active-site Nucleophile is the serine 98. Residue histidine 123 is part of the active site.

Belongs to the peptidase S14 family. As to quaternary structure, fourteen ClpP subunits assemble into 2 heptameric rings which stack back to back to give a disk-like structure with a central cavity, resembling the structure of eukaryotic proteasomes.

It localises to the cytoplasm. The enzyme catalyses Hydrolysis of proteins to small peptides in the presence of ATP and magnesium. alpha-casein is the usual test substrate. In the absence of ATP, only oligopeptides shorter than five residues are hydrolyzed (such as succinyl-Leu-Tyr-|-NHMec, and Leu-Tyr-Leu-|-Tyr-Trp, in which cleavage of the -Tyr-|-Leu- and -Tyr-|-Trp bonds also occurs).. In terms of biological role, cleaves peptides in various proteins in a process that requires ATP hydrolysis. Has a chymotrypsin-like activity. Plays a major role in the degradation of misfolded proteins. This is ATP-dependent Clp protease proteolytic subunit from Acidobacterium capsulatum (strain ATCC 51196 / DSM 11244 / BCRC 80197 / JCM 7670 / NBRC 15755 / NCIMB 13165 / 161).